We begin with the raw amino-acid sequence, 257 residues long: Phosphate import ATP-binding protein PstB (257 aa).

In terms of domain architecture, ABC transporter spans 11 to 252 (IQVRNLNFYY…PAKKQTEDYI (242 aa)). 43-50 (GPSGCGKS) is a binding site for ATP.

The protein belongs to the ABC transporter superfamily. Phosphate importer (TC 3.A.1.7) family. In terms of assembly, the complex is composed of two ATP-binding proteins (PstB), two transmembrane proteins (PstC and PstA) and a solute-binding protein (PstS).

Its subcellular location is the cell inner membrane. The enzyme catalyses phosphate(out) + ATP + H2O = ADP + 2 phosphate(in) + H(+). In terms of biological role, part of the ABC transporter complex PstSACB involved in phosphate import. Responsible for energy coupling to the transport system. The polypeptide is Phosphate import ATP-binding protein PstB (Escherichia coli O6:K15:H31 (strain 536 / UPEC)).